Consider the following 186-residue polypeptide: Ribosome-recycling factor (186 aa).

It belongs to the RRF family.

Its subcellular location is the cytoplasm. Functionally, responsible for the release of ribosomes from messenger RNA at the termination of protein biosynthesis. May increase the efficiency of translation by recycling ribosomes from one round of translation to another. The protein is Ribosome-recycling factor of Prosthecochloris aestuarii (strain DSM 271 / SK 413).